A 565-amino-acid chain; its full sequence is Proline--tRNA ligase (565 aa).

The protein belongs to the class-II aminoacyl-tRNA synthetase family. ProS type 1 subfamily. In terms of assembly, homodimer.

The protein resides in the cytoplasm. It carries out the reaction tRNA(Pro) + L-proline + ATP = L-prolyl-tRNA(Pro) + AMP + diphosphate. Functionally, catalyzes the attachment of proline to tRNA(Pro) in a two-step reaction: proline is first activated by ATP to form Pro-AMP and then transferred to the acceptor end of tRNA(Pro). As ProRS can inadvertently accommodate and process non-cognate amino acids such as alanine and cysteine, to avoid such errors it has two additional distinct editing activities against alanine. One activity is designated as 'pretransfer' editing and involves the tRNA(Pro)-independent hydrolysis of activated Ala-AMP. The other activity is designated 'posttransfer' editing and involves deacylation of mischarged Ala-tRNA(Pro). The misacylated Cys-tRNA(Pro) is not edited by ProRS. The polypeptide is Proline--tRNA ligase (Lactobacillus gasseri (strain ATCC 33323 / DSM 20243 / BCRC 14619 / CIP 102991 / JCM 1131 / KCTC 3163 / NCIMB 11718 / NCTC 13722 / AM63)).